Here is a 235-residue protein sequence, read N- to C-terminus: Aspartate/glutamate leucyltransferase (235 aa).

Belongs to the R-transferase family. Bpt subfamily.

It is found in the cytoplasm. It catalyses the reaction N-terminal L-glutamyl-[protein] + L-leucyl-tRNA(Leu) = N-terminal L-leucyl-L-glutamyl-[protein] + tRNA(Leu) + H(+). The catalysed reaction is N-terminal L-aspartyl-[protein] + L-leucyl-tRNA(Leu) = N-terminal L-leucyl-L-aspartyl-[protein] + tRNA(Leu) + H(+). Functions in the N-end rule pathway of protein degradation where it conjugates Leu from its aminoacyl-tRNA to the N-termini of proteins containing an N-terminal aspartate or glutamate. This Pseudomonas entomophila (strain L48) protein is Aspartate/glutamate leucyltransferase.